The chain runs to 149 residues: 3-hydroxyacyl-[acyl-carrier-protein] dehydratase FabZ (149 aa).

The active site involves histidine 53.

It belongs to the thioester dehydratase family. FabZ subfamily.

The protein localises to the cytoplasm. The catalysed reaction is a (3R)-hydroxyacyl-[ACP] = a (2E)-enoyl-[ACP] + H2O. In terms of biological role, involved in unsaturated fatty acids biosynthesis. Catalyzes the dehydration of short chain beta-hydroxyacyl-ACPs and long chain saturated and unsaturated beta-hydroxyacyl-ACPs. This chain is 3-hydroxyacyl-[acyl-carrier-protein] dehydratase FabZ, found in Neisseria meningitidis serogroup C / serotype 2a (strain ATCC 700532 / DSM 15464 / FAM18).